The chain runs to 793 residues: Cation channel sperm-associated auxiliary subunit delta (793 aa).

Residues 1–20 (MLMLMLVAAVTMWLRPLVTA) form the signal peptide. Residues 21–725 (QPLCRARTVR…AFPVQLVSAG (705 aa)) are Extracellular-facing. 7 cysteine pairs are disulfide-bonded: Cys-24-Cys-370, Cys-60-Cys-146, Cys-145-Cys-153, Cys-388-Cys-497, Cys-511-Cys-703, Cys-526-Cys-573, and Cys-625-Cys-653. An N-linked (GlcNAc...) asparagine glycan is attached at Asn-128. 5 N-linked (GlcNAc...) asparagine glycosylation sites follow: Asn-231, Asn-241, Asn-473, Asn-539, and Asn-631. Residues 726–747 (VVMVLLISSILGSVWLAYMIPR) traverse the membrane as a helical segment. The Cytoplasmic segment spans residues 748–793 (LLRTARGRRMTSFVAQLYGRCKTVCQFRASATARTGSKPMGRHRSS).

It belongs to the CATSPERD family. Component of the CatSper complex or CatSpermasome composed of the core pore-forming members CATSPER1, CATSPER2, CATSPER3 and CATSPER4 as well as auxiliary members CATSPERB, CATSPERG, CATSPERD, CATSPERE, CATSPERZ, C2CD6/CATSPERT, TMEM249, TMEM262 and EFCAB9. HSPA1 may be an additional auxiliary complex member. The core complex members CATSPER1, CATSPER2, CATSPER3 and CATSPER4 form a heterotetrameric channel. The auxiliary CATSPERB, CATSPERG, CATSPERD and CATSPERE subunits form a pavilion-like structure over the pore which stabilizes the complex through interactions with CATSPER4, CATSPER3, CATSPER1 and CATSPER2 respectively. TMEM262/CATSPERH interacts with CATSPERB, further stabilizing the complex. C2CD6/CATSPERT interacts at least with CATSPERD and is required for targeting the CatSper complex in the flagellar membrane.

It is found in the cell projection. The protein resides in the cilium. It localises to the flagellum membrane. Auxiliary component of the CatSper complex, a complex involved in sperm cell hyperactivation. Sperm cell hyperactivation is needed for sperm motility which is essential late in the preparation of sperm for fertilization. Required for CATSPER1 stability before intraflagellar transport and/or incorporation of the CatSper complex channel into the flagellar membrane. The chain is Cation channel sperm-associated auxiliary subunit delta from Macaca fascicularis (Crab-eating macaque).